The primary structure comprises 220 residues: Ribose-5-phosphate isomerase A (220 aa).

Residues 28–31 (TGST), 81–84 (DGAD), and 94–97 (KGGG) each bind substrate. The active-site Proton acceptor is Glu103. A substrate-binding site is contributed by Lys121.

Belongs to the ribose 5-phosphate isomerase family. Homodimer.

It carries out the reaction aldehydo-D-ribose 5-phosphate = D-ribulose 5-phosphate. Its pathway is carbohydrate degradation; pentose phosphate pathway; D-ribose 5-phosphate from D-ribulose 5-phosphate (non-oxidative stage): step 1/1. Functionally, catalyzes the reversible conversion of ribose-5-phosphate to ribulose 5-phosphate. This chain is Ribose-5-phosphate isomerase A, found in Shewanella baltica (strain OS185).